A 306-amino-acid polypeptide reads, in one-letter code: tRNA dimethylallyltransferase (306 aa).

15–22 provides a ligand contact to ATP; it reads GPTASGKS. Residue 17 to 22 participates in substrate binding; that stretch reads TASGKS. Residues 40-43 are interaction with substrate tRNA; that stretch reads DSMQ.

Belongs to the IPP transferase family. Monomer. The cofactor is Mg(2+).

It carries out the reaction adenosine(37) in tRNA + dimethylallyl diphosphate = N(6)-dimethylallyladenosine(37) in tRNA + diphosphate. Functionally, catalyzes the transfer of a dimethylallyl group onto the adenine at position 37 in tRNAs that read codons beginning with uridine, leading to the formation of N6-(dimethylallyl)adenosine (i(6)A). In Methylobacterium sp. (strain 4-46), this protein is tRNA dimethylallyltransferase.